A 105-amino-acid chain; its full sequence is Transcriptional regulator SutA (105 aa).

Acidic residues predominate over residues 1–37; it reads MSEEELEQDELDGADEDDGEELAAADDGEADSSDGDE. A disordered region spans residues 1-105; it reads MSEEELEQDE…PDSKYGSRPI (105 aa). Composition is skewed to basic and acidic residues over residues 59–83 and 92–105; these read AKQKERDALAKAMEEFLSRGGKVQE and PPKKPDSKYGSRPI.

As to quaternary structure, interacts with RNA polymerase.

Functionally, causes widespread changes in gene expression, and plays a direct role in the regulation of genes encoding ribosomal components. Associates with chromosomal DNA through interaction with RNA polymerase. Contributes to biofilm formation and secondary metabolite production. Important during transitions to and from the survival state. This Pseudomonas aeruginosa (strain UCBPP-PA14) protein is Transcriptional regulator SutA.